A 101-amino-acid polypeptide reads, in one-letter code: Small ribosomal subunit protein uS14 (101 aa).

Belongs to the universal ribosomal protein uS14 family. Part of the 30S ribosomal subunit. Contacts proteins S3 and S10.

In terms of biological role, binds 16S rRNA, required for the assembly of 30S particles and may also be responsible for determining the conformation of the 16S rRNA at the A site. The sequence is that of Small ribosomal subunit protein uS14 from Vesicomyosocius okutanii subsp. Calyptogena okutanii (strain HA).